The primary structure comprises 193 residues: Xanthine phosphoribosyltransferase (193 aa).

Xanthine contacts are provided by leucine 20 and threonine 27. Residue 128-132 participates in 5-phospho-alpha-D-ribose 1-diphosphate binding; the sequence is ANGQA. Lysine 156 lines the xanthine pocket.

The protein belongs to the purine/pyrimidine phosphoribosyltransferase family. Xpt subfamily. As to quaternary structure, homodimer.

The protein localises to the cytoplasm. The catalysed reaction is XMP + diphosphate = xanthine + 5-phospho-alpha-D-ribose 1-diphosphate. It functions in the pathway purine metabolism; XMP biosynthesis via salvage pathway; XMP from xanthine: step 1/1. Functionally, converts the preformed base xanthine, a product of nucleic acid breakdown, to xanthosine 5'-monophosphate (XMP), so it can be reused for RNA or DNA synthesis. This is Xanthine phosphoribosyltransferase from Streptococcus pneumoniae serotype 19F (strain G54).